We begin with the raw amino-acid sequence, 376 residues long: c-di-GMP synthase (376 aa).

This sequence belongs to the CD-NTase family. G05 subfamily.

The enzyme catalyses 2 GTP = 3',3'-c-di-GMP + 2 diphosphate. In terms of biological role, cyclic nucleotide synthase (second messenger synthase) of a CBASS antivirus system. CBASS (cyclic oligonucleotide-based antiphage signaling system) provides immunity against bacteriophage. The CD-NTase protein synthesizes cyclic nucleotides in response to infection; these serve as specific second messenger signals. The signals activate a diverse range of effectors, leading to bacterial cell death and thus abortive phage infection. A type I-D CBASS(GG) system. Its function is as follows. Cyclic dinucleotide synthase that catalyzes the synthesis of c-di-GMP, has no activity with other NTP substrates. The protein is c-di-GMP synthase of Roseivirga ehrenbergii (strain DSM 102268 / JCM 13514 / KCTC 12282 / NCIMB 14502 / KMM 6017).